Reading from the N-terminus, the 546-residue chain is CTP synthase (546 aa).

Positions 1-266 (MAKYYIFITG…DSYVCDRFCI (266 aa)) are amidoligase domain. Ser14 lines the CTP pocket. Ser14 provides a ligand contact to UTP. Residues 15–20 (SLGKGI) and Asp72 contribute to the ATP site. Residues Asp72 and Glu140 each contribute to the Mg(2+) site. CTP is bound by residues 147–149 (DIE), 187–192 (KTKPTQ), and Lys223. Residues 187–192 (KTKPTQ) and Lys223 contribute to the UTP site. The region spanning 291 to 544 (NIGIIGKYTE…VKAAFDFKNK (254 aa)) is the Glutamine amidotransferase type-1 domain. Gly352 contributes to the L-glutamine binding site. Residue Cys379 is the Nucleophile; for glutamine hydrolysis of the active site. Residues 380 to 383 (LGMQ), Glu403, and Arg470 contribute to the L-glutamine site. Residues His517 and Glu519 contribute to the active site.

This sequence belongs to the CTP synthase family. As to quaternary structure, homotetramer.

It carries out the reaction UTP + L-glutamine + ATP + H2O = CTP + L-glutamate + ADP + phosphate + 2 H(+). The catalysed reaction is L-glutamine + H2O = L-glutamate + NH4(+). The enzyme catalyses UTP + NH4(+) + ATP = CTP + ADP + phosphate + 2 H(+). It participates in pyrimidine metabolism; CTP biosynthesis via de novo pathway; CTP from UDP: step 2/2. Its activity is regulated as follows. Allosterically activated by GTP, when glutamine is the substrate; GTP has no effect on the reaction when ammonia is the substrate. The allosteric effector GTP functions by stabilizing the protein conformation that binds the tetrahedral intermediate(s) formed during glutamine hydrolysis. Inhibited by the product CTP, via allosteric rather than competitive inhibition. Functionally, catalyzes the ATP-dependent amination of UTP to CTP with either L-glutamine or ammonia as the source of nitrogen. Regulates intracellular CTP levels through interactions with the four ribonucleotide triphosphates. The sequence is that of CTP synthase from Wigglesworthia glossinidia brevipalpis.